We begin with the raw amino-acid sequence, 325 residues long: Glycerol-3-phosphate dehydrogenase [NAD(P)+] (325 aa).

Residues Trp-15, Arg-35, and Lys-107 each contribute to the NADPH site. Residues Lys-107, Gly-135, and Ser-137 each coordinate sn-glycerol 3-phosphate. Position 139 (Ala-139) interacts with NADPH. Residues Lys-190, Asp-243, Ser-253, Arg-254, and Asn-255 each coordinate sn-glycerol 3-phosphate. Lys-190 serves as the catalytic Proton acceptor. Residue Arg-254 participates in NADPH binding. 2 residues coordinate NADPH: Leu-272 and Glu-274.

Belongs to the NAD-dependent glycerol-3-phosphate dehydrogenase family.

It localises to the cytoplasm. It carries out the reaction sn-glycerol 3-phosphate + NAD(+) = dihydroxyacetone phosphate + NADH + H(+). The enzyme catalyses sn-glycerol 3-phosphate + NADP(+) = dihydroxyacetone phosphate + NADPH + H(+). The protein operates within membrane lipid metabolism; glycerophospholipid metabolism. Functionally, catalyzes the reduction of the glycolytic intermediate dihydroxyacetone phosphate (DHAP) to sn-glycerol 3-phosphate (G3P), the key precursor for phospholipid synthesis. The protein is Glycerol-3-phosphate dehydrogenase [NAD(P)+] of Afipia carboxidovorans (strain ATCC 49405 / DSM 1227 / KCTC 32145 / OM5) (Oligotropha carboxidovorans).